We begin with the raw amino-acid sequence, 465 residues long: Biotin biosynthesis bifunctional protein BioCD (465 aa).

Residues 1–254 (MTPFLPDRSI…AYGQWRKPRG (254 aa)) form a malonyl-ACP O-methyltransferase region. ATP-binding positions include Asp-234 and 263 to 268 (GVGKTL). Residues 255–465 (VFVTGTDTGV…DSLLSSNASR (211 aa)) form a DTB synthetase region. Thr-267 is a Mg(2+) binding site. Lys-283 is an active-site residue. Residue Thr-287 coordinates substrate. Residues Asp-295, 351–354 (EGAG), and 435–437 (PQL) contribute to the ATP site. Residues Asp-295 and Glu-351 each contribute to the Mg(2+) site.

The protein in the N-terminal section; belongs to the methyltransferase superfamily. It in the C-terminal section; belongs to the dethiobiotin synthetase family. The cofactor is Mg(2+).

The protein localises to the cytoplasm. The catalysed reaction is (7R,8S)-7,8-diammoniononanoate + CO2 + ATP = (4R,5S)-dethiobiotin + ADP + phosphate + 3 H(+). The enzyme catalyses malonyl-[ACP] + S-adenosyl-L-methionine = malonyl-[ACP] methyl ester + S-adenosyl-L-homocysteine. The protein operates within cofactor biosynthesis; biotin biosynthesis; biotin from 7,8-diaminononanoate: step 1/2. Its pathway is cofactor biosynthesis; biotin biosynthesis. Converts the free carboxyl group of a malonyl-thioester to its methyl ester by transfer of a methyl group from S-adenosyl-L-methionine (SAM). It allows synthesis of pimeloyl-ACP via the fatty acid synthetic pathway. In terms of biological role, catalyzes a mechanistically unusual reaction, the ATP-dependent insertion of CO2 between the N7 and N8 nitrogen atoms of 7,8-diaminopelargonic acid (DAPA, also called 7,8-diammoniononanoate) to form a ureido ring. In Bordetella avium (strain 197N), this protein is Biotin biosynthesis bifunctional protein BioCD.